The sequence spans 300 residues: Ubiquitin thioesterase otu2 (300 aa).

Disordered stretches follow at residues 23-73 (RKQL…QQED) and 89-141 (TAEK…SEKM). The span at 48–61 (LSQKHATERQKLDK) shows a compositional bias: basic and acidic residues. Residues 62 to 71 (GDEETNETQQ) are compositionally biased toward acidic residues. Positions 89 to 109 (TAEKSSVQSSLNTKENTPQQP) are enriched in polar residues. The segment covering 115 to 141 (RQKERLERRKAEMKKMSEQAELESEKM) has biased composition (basic and acidic residues). In terms of domain architecture, OTU spans 161-298 (LVAVDIPADG…GAHYNSLLYR (138 aa)).

The protein resides in the cytoplasm. It carries out the reaction Thiol-dependent hydrolysis of ester, thioester, amide, peptide and isopeptide bonds formed by the C-terminal Gly of ubiquitin (a 76-residue protein attached to proteins as an intracellular targeting signal).. Hydrolase that can remove conjugated ubiquitin from proteins and may therefore play an important regulatory role at the level of protein turnover by preventing degradation. The sequence is that of Ubiquitin thioesterase otu2 (otu2) from Schizosaccharomyces pombe (strain 972 / ATCC 24843) (Fission yeast).